Here is a 557-residue protein sequence, read N- to C-terminus: Potassium-transporting ATPase potassium-binding subunit (557 aa).

The next 12 membrane-spanning stretches (helical) occupy residues 5–25 (GFLL…PLGS), 63–83 (LCAI…MLLG), 132–152 (GLTV…FALI), 170–190 (LLRI…LFFI), 253–273 (FVQM…FGEV), 283–303 (LLWA…WAEV), 329–349 (VLVS…AVIA), 356–376 (ALGG…FGGV), 379–399 (GLYG…LMIG), 416–436 (LTAL…ALAM), 484–504 (LLAF…MAIA), and 526–546 (LFVG…FIPA).

The protein belongs to the KdpA family. As to quaternary structure, the system is composed of three essential subunits: KdpA, KdpB and KdpC.

The protein resides in the cell inner membrane. Part of the high-affinity ATP-driven potassium transport (or Kdp) system, which catalyzes the hydrolysis of ATP coupled with the electrogenic transport of potassium into the cytoplasm. This subunit binds the periplasmic potassium ions and delivers the ions to the membrane domain of KdpB through an intramembrane tunnel. This is Potassium-transporting ATPase potassium-binding subunit from Escherichia coli O139:H28 (strain E24377A / ETEC).